Here is a 415-residue protein sequence, read N- to C-terminus: Gamma-glutamyl phosphate reductase (415 aa).

It belongs to the gamma-glutamyl phosphate reductase family.

It localises to the cytoplasm. The enzyme catalyses L-glutamate 5-semialdehyde + phosphate + NADP(+) = L-glutamyl 5-phosphate + NADPH + H(+). It functions in the pathway amino-acid biosynthesis; L-proline biosynthesis; L-glutamate 5-semialdehyde from L-glutamate: step 2/2. In terms of biological role, catalyzes the NADPH-dependent reduction of L-glutamate 5-phosphate into L-glutamate 5-semialdehyde and phosphate. The product spontaneously undergoes cyclization to form 1-pyrroline-5-carboxylate. In Bacteroides fragilis (strain YCH46), this protein is Gamma-glutamyl phosphate reductase.